A 394-amino-acid chain; its full sequence is GDNF family receptor alpha-like (394 aa).

An N-terminal signal peptide occupies residues 1–18; sequence MIVFIFLAMGLSLENEYT. Residues 19–351 lie on the Extracellular side of the membrane; it reads SQTNNCTYLR…TGFHSPFNGE (333 aa). 6 N-linked (GlcNAc...) asparagine glycosylation sites follow: N23, N50, N62, N67, N103, and N116. Cystine bridges form between C131/C189, C138/C144, C155/C167, C162/C210, C191/C198, C220/C291, C227/C233, C244/C275, C252/C258, C269/C316, and C293/C304. The required for interaction with GDF15 stretch occupies residues 149 to 228; sequence ASYLKACSAN…TCLSVIRSCQ (80 aa). A helical transmembrane segment spans residues 352 to 371; sequence VIYAAMCMTVTCGILLLVMV. The Cytoplasmic portion of the chain corresponds to 372–394; sequence KLRTSRISSKARDPSSIQIPGEL.

This sequence belongs to the GDNFR family. Interacts (via the extracellular domain) with GDF15 and RET; receptor of GDF15, mediates cellular signaling through interaction with RET after GDF15-binding. Interaction with RET requires previous GDF15-binding. In terms of processing, cleaved and inactivated by MMP14, inhibiting the GDF15-GFRAL aversive response. As to expression, expressed in the brainstem, restricted to cells in the area postrema and the immediately adjacent region of the nucleus tractus solitarius (at protein level). Detected at low levels in testis and adipose tissue.

It localises to the cell membrane. Its activity is regulated as follows. Specifically inhibited by 3P10 monoclonal antibody. Strongly activated by LY3463251, a long-acting and stable agonist composed of GDF15 conjugated monomeric human IgG4 Fc. Functionally, brainstem-restricted receptor for GDF15 hormone, which triggers an aversive response, characterized by nausea, vomiting, and/or loss of appetite in response to various stresses. The aversive response is both required to reduce continuing exposure to those stresses at the time of exposure and to promote avoidance behavior in the future. The GDF15-GFRAL aversive response is triggered by stresses, such as anticancer drugs (camptothecin or cisplatin), cancers or drugs such as metformin. Upon interaction with its ligand, GDF15, mediates the GDF15-induced autophosphorylation and activation of the RET tyrosine kinase receptor, leading to activation of MAPK- and AKT- signaling pathways. Ligand-binding activates GFRAL-expressing neurons localized in the area postrema and nucleus tractus solitarius of the brainstem. The GDF15-GFRAL signal induces expression of genes involved in metabolism, such as lipid metabolism in adipose tissues. The polypeptide is GDNF family receptor alpha-like (Homo sapiens (Human)).